The following is a 518-amino-acid chain: Suppressor of hairless homolog (518 aa).

A disordered region spans residues 22-59 (ETDQQRSHVKERVNGTPNQNGGTSTSSKPRSVFENRPP). The span at 24-34 (DQQRSHVKERV) shows a compositional bias: basic and acidic residues. The span at 36-50 (GTPNQNGGTSTSSKP) shows a compositional bias: polar residues. DNA-binding regions lie at residues 89–96 (KSYGNEKR), 223–232 (RLRSQTVSTR), and 296–328 (RKVDKQTAILNADDPVSQLHKCAFYLKDSERMY). The region spanning 386-476 (PVVHSLQLNG…YPTNLTFTFT (91 aa)) is the IPT/TIG domain.

The protein belongs to the Su(H) family. Interacts with activated Notch proteins.

It localises to the nucleus. In terms of biological role, transcriptional regulator that plays a central role in Notch signaling, a signaling pathway involved in cell-cell communication that regulates a broad spectrum of cell-fate determinations. Acts as a transcriptional repressor when it is not associated with Notch proteins. When associated with some Notch protein, it acts as a transcriptional activator that activates transcription of Notch target genes. The protein is Suppressor of hairless homolog (RBP-JK) of Halocynthia roretzi (Sea squirt).